We begin with the raw amino-acid sequence, 428 residues long: 3-phosphoshikimate 1-carboxyvinyltransferase (428 aa).

3-phosphoshikimate contacts are provided by Lys-22, Ser-23, and Arg-27. Position 22 (Lys-22) interacts with phosphoenolpyruvate. Phosphoenolpyruvate contacts are provided by Gly-96 and Arg-124. Ser-169, Ser-170, Gln-171, Ser-197, Asp-313, Asn-336, and Lys-340 together coordinate 3-phosphoshikimate. Residue Gln-171 coordinates phosphoenolpyruvate. Asp-313 functions as the Proton acceptor in the catalytic mechanism. Positions 344, 386, and 411 each coordinate phosphoenolpyruvate.

It belongs to the EPSP synthase family. As to quaternary structure, monomer.

The protein localises to the cytoplasm. The enzyme catalyses 3-phosphoshikimate + phosphoenolpyruvate = 5-O-(1-carboxyvinyl)-3-phosphoshikimate + phosphate. The protein operates within metabolic intermediate biosynthesis; chorismate biosynthesis; chorismate from D-erythrose 4-phosphate and phosphoenolpyruvate: step 6/7. Catalyzes the transfer of the enolpyruvyl moiety of phosphoenolpyruvate (PEP) to the 5-hydroxyl of shikimate-3-phosphate (S3P) to produce enolpyruvyl shikimate-3-phosphate and inorganic phosphate. The polypeptide is 3-phosphoshikimate 1-carboxyvinyltransferase (Proteus mirabilis (strain HI4320)).